The primary structure comprises 360 residues: NAD(P)H-quinone oxidoreductase subunit 1, chloroplastic (360 aa).

8 consecutive transmembrane segments (helical) span residues 29–49 (WIPL…LVIV), 96–116 (IWLF…AYLV), 128–148 (ISLG…GLLM), 166–186 (AAQA…ICLL), 204–224 (ILGW…IAAL), 255–277 (GLFY…ILYL), 297–317 (IFAA…FIFL), and 333–353 (LLDL…LLTA).

The protein belongs to the complex I subunit 1 family. In terms of assembly, NDH is composed of at least 16 different subunits, 5 of which are encoded in the nucleus.

It localises to the plastid. It is found in the chloroplast thylakoid membrane. The catalysed reaction is a plastoquinone + NADH + (n+1) H(+)(in) = a plastoquinol + NAD(+) + n H(+)(out). It carries out the reaction a plastoquinone + NADPH + (n+1) H(+)(in) = a plastoquinol + NADP(+) + n H(+)(out). Its function is as follows. NDH shuttles electrons from NAD(P)H:plastoquinone, via FMN and iron-sulfur (Fe-S) centers, to quinones in the photosynthetic chain and possibly in a chloroplast respiratory chain. The immediate electron acceptor for the enzyme in this species is believed to be plastoquinone. Couples the redox reaction to proton translocation, and thus conserves the redox energy in a proton gradient. In Chlorokybus atmophyticus (Soil alga), this protein is NAD(P)H-quinone oxidoreductase subunit 1, chloroplastic.